Here is a 464-residue protein sequence, read N- to C-terminus: L-cystine uptake protein TcyP (464 aa).

A run of 10 helical transmembrane segments spans residues 3-23, 34-54, 73-93, 107-127, 184-204, 225-245, 263-283, 347-367, 371-391, and 395-415; these read TLLV…LYYM, VFTA…IYEP, YVKL…ISAF, GLII…GIAA, PTST…FIGV, IVMR…LALM, FVLA…LLIA, AGIY…IDPL, FILT…GVGG, and FAAL…ALVI.

Belongs to the dicarboxylate/amino acid:cation symporter (DAACS) (TC 2.A.23) family.

The protein resides in the membrane. In terms of biological role, mediates uptake of L-cystine, the oxidized form of L-cysteine. This Bacillus thuringiensis (strain Al Hakam) protein is L-cystine uptake protein TcyP.